Consider the following 174-residue polypeptide: Large ribosomal subunit protein uL10 (174 aa).

The protein belongs to the universal ribosomal protein uL10 family. Part of the ribosomal stalk of the 50S ribosomal subunit. The N-terminus interacts with L11 and the large rRNA to form the base of the stalk. The C-terminus forms an elongated spine to which L12 dimers bind in a sequential fashion forming a multimeric L10(L12)X complex.

Its function is as follows. Forms part of the ribosomal stalk, playing a central role in the interaction of the ribosome with GTP-bound translation factors. This is Large ribosomal subunit protein uL10 from Trichlorobacter lovleyi (strain ATCC BAA-1151 / DSM 17278 / SZ) (Geobacter lovleyi).